The sequence spans 1989 residues: Zinc finger C3H1 domain-containing protein (1989 aa).

4 disordered regions span residues 1-133, 148-218, 251-290, and 310-365; these read MATA…RPSF, GRPY…SKNE, SSKE…PEEK, and LPGD…LGED. A2 carries the post-translational modification N-acetylalanine. 3 positions are modified to phosphoserine: S15, S28, and S34. The segment covering 20–32 has biased composition (acidic residues); sequence GELEDGEISDDDN. Over residues 33–44 the composition is skewed to low complexity; the sequence is NSQIRSRSSSSS. Residues 62 to 72 show a composition bias toward gly residues; the sequence is RGGGSGGGGGS. Composition is skewed to low complexity over residues 114 to 132, 183 to 192, and 201 to 210; these read PPSV…PRPS, GFSSSQSWRE, and KSFGRSPSRK. S128 is modified (phosphoserine). Residues 219–259 are a coiled coil; it reads NCVEETFEDLLLKYKQIQLELECINKDEKLALSSKEENVQE. S251 is subject to Phosphoserine. Over residues 251–262 the composition is skewed to basic and acidic residues; that stretch reads SSKEENVQEDPK. A compositionally biased stretch (polar residues) spans 266–279; the sequence is FEDQTSTDNVSITK. Positions 280–290 are enriched in basic and acidic residues; it reads DSSKEVAPEEK. The span at 330 to 340 shows a compositional bias: polar residues; sequence KSDTTDSSQGL. A phosphoserine mark is found at S352 and S383. Positions 358–389 form a coiled coil; it reads SEKKLGEDEEELSELQLRLLALQSASKKWQQK. 2 disordered regions span residues 385–671 and 711–770; these read KWQQ…SNLS and LNDS…PEAL. Residues 392-402 are compositionally biased toward basic and acidic residues; it reads QVMKESKEKLT. Residues 430-440 show a composition bias toward basic residues; the sequence is ALRKQQTKAWK. The stretch at 432–487 forms a coiled coil; the sequence is RKQQTKAWKKLQQQKEQERQKEEDQRKQAEEEERRKREEEIRKIRDLSNQEEQYNR. Composition is skewed to basic and acidic residues over residues 444–479 and 501–515; these read QQKE…RDLS and KSSD…DKQP. Residues 527–537 show a composition bias toward acidic residues; sequence NYEEVAMDTDS. A compositionally biased stretch (low complexity) spans 574–583; it reads VSSLPPLSQP. A compositionally biased stretch (pro residues) spans 594–616; it reads PLPPLPPLPPLPPEDPEQPPKPP. Positions 647–671 are enriched in polar residues; the sequence is TSSNSDPPSPPVLNNSHPVPRSNLS. S662, S714, S717, and S719 each carry phosphoserine. The span at 755–770 shows a compositional bias: basic and acidic residues; it reads PKSEKENDPLRTPEAL. At T766 the chain carries Phosphothreonine. A phosphoserine mark is found at S805 and S809. A coiled-coil region spans residues 847 to 909; that stretch reads LKNLVQQEAK…QQRVTIKKAL (63 aa). Residues S948, S949, and S953 each carry the phosphoserine modification. A coiled-coil region spans residues 965 to 989; sequence EKRRLQKLEYEYALKIQKLKEARAL. Residues S998 and S1046 each carry the phosphoserine modification. The C3H1-type zinc finger occupies 1185-1206; that stretch reads FCRFDLTGTCNDDDCQWQHIQD. Phosphoserine is present on residues S1301, S1303, and S1304. TPR repeat units follow at residues 1361–1400, 1401–1434, 1438–1471, 1478–1511, 1602–1635, 1636–1669, and 1745–1778; these read VQLW…NKDN, PEIW…APDY, WTFL…ETSN, LEAL…ANDG, LPLY…CPIN, CQLL…NPQN, and PYLW…AMRC.

As to quaternary structure, component of the poly(A) tail exosome targeting (PAXT) complex made of accessory factors, such as PABPN1, ZFC3H1 and MTREX, and which directs a subset of long and polyadenylated poly(A) RNAs for exosomal degradation. Co-localizes with component of the CBC-ARS2 (CBCA) complex. Binds to RNA exosome components. Interacts with NCBP1/CBP80, ZC3H18, MTREX and PABPN1 in a RNase-insensitive manner, and with PABPC4, PABPC1 and ZC3H14 in a RNase-sensitive manner.

It localises to the nucleus. Functionally, subunit of the trimeric poly(A) tail exosome targeting (PAXT) complex, a complex that directs a subset of long and polyadenylated poly(A) RNAs for exosomal degradation. The RNA exosome is fundamental for the degradation of RNA in eukaryotic nuclei. Substrate targeting is facilitated by its cofactor MTREX, which links to RNA-binding protein adapters. This chain is Zinc finger C3H1 domain-containing protein (ZFC3H1), found in Homo sapiens (Human).